We begin with the raw amino-acid sequence, 990 residues long: Kinesin-related protein 5 (990 aa).

The region spanning 6–330 (NIRVMCRFRP…LKFGARAKSI (325 aa)) is the Kinesin motor domain. 83 to 90 (GQTGSGKT) lines the ATP pocket. Disordered stretches follow at residues 401–485 (QSNS…SSID) and 732–788 (FSSS…QDQQ). The segment covering 406-418 (SGGGGSGSSGGSS) has biased composition (gly residues). Composition is skewed to low complexity over residues 466 to 485 (TSSI…SSID) and 733 to 781 (SSSN…PSSN). Residues 513–948 (IEMEKMKEDT…DQLISTQRLI (436 aa)) are a coiled coil.

It belongs to the TRAFAC class myosin-kinesin ATPase superfamily. Kinesin family. Kinesin subfamily. As to quaternary structure, interacts with actin.

It localises to the cytoplasm. It is found in the cytoskeleton. Microtubule-associated force-producing protein that plays a role in organelle transport. Its motor activity is directed toward the microtubule's plus end. May connect microtubules to actin filaments. Associates with actin-based structures in cells and is likely involved in the organization of actin cytoskeletons in such structures. The chain is Kinesin-related protein 5 (kif5) from Dictyostelium discoideum (Social amoeba).